The following is a 141-amino-acid chain: Nucleoside diphosphate kinase (141 aa).

Residues Lys-9, Phe-57, Arg-85, Thr-91, Arg-102, and Asn-112 each coordinate ATP. The active-site Pros-phosphohistidine intermediate is His-115.

Belongs to the NDK family. As to quaternary structure, homotetramer. Requires Mg(2+) as cofactor.

Its subcellular location is the cytoplasm. It carries out the reaction a 2'-deoxyribonucleoside 5'-diphosphate + ATP = a 2'-deoxyribonucleoside 5'-triphosphate + ADP. It catalyses the reaction a ribonucleoside 5'-diphosphate + ATP = a ribonucleoside 5'-triphosphate + ADP. Major role in the synthesis of nucleoside triphosphates other than ATP. The ATP gamma phosphate is transferred to the NDP beta phosphate via a ping-pong mechanism, using a phosphorylated active-site intermediate. The polypeptide is Nucleoside diphosphate kinase (Chlamydia muridarum (strain MoPn / Nigg)).